The chain runs to 479 residues: Dihydrolipoyl dehydrogenase (479 aa).

FAD contacts are provided by residues 41 to 50, K59, A124, and 153 to 155; these read EKRGALGGTC and TGS. C50 and C55 are joined by a disulfide. NAD(+) contacts are provided by residues 190–197, E213, I247, and G284; that span reads GGGVIGLE. FAD contacts are provided by residues D325 and 332 to 335; that span reads MLAH. H458 (proton acceptor) is an active-site residue.

This sequence belongs to the class-I pyridine nucleotide-disulfide oxidoreductase family. Homodimer. FAD serves as cofactor.

The catalysed reaction is N(6)-[(R)-dihydrolipoyl]-L-lysyl-[protein] + NAD(+) = N(6)-[(R)-lipoyl]-L-lysyl-[protein] + NADH + H(+). The sequence is that of Dihydrolipoyl dehydrogenase from Trypanosoma brucei brucei.